The following is a 394-amino-acid chain: Elongation factor Tu (394 aa).

The region spanning 10-204 (KPHVNIGTIG…AVDSYIPQPV (195 aa)) is the tr-type G domain. Positions 19–26 (GHVDHGKT) are G1. 19 to 26 (GHVDHGKT) lines the GTP pocket. Thr-26 contributes to the Mg(2+) binding site. Positions 60-64 (GITIS) are G2. Positions 81–84 (DCPG) are G3. GTP is bound by residues 81–85 (DCPGH) and 136–139 (NKID). A G4 region spans residues 136-139 (NKID). Residues 174–176 (SAL) are G5.

It belongs to the TRAFAC class translation factor GTPase superfamily. Classic translation factor GTPase family. EF-Tu/EF-1A subfamily. Monomer.

It is found in the cytoplasm. It catalyses the reaction GTP + H2O = GDP + phosphate + H(+). Functionally, GTP hydrolase that promotes the GTP-dependent binding of aminoacyl-tRNA to the A-site of ribosomes during protein biosynthesis. The protein is Elongation factor Tu of Rickettsia conorii (strain ATCC VR-613 / Malish 7).